The chain runs to 414 residues: Transcription factor FAMA (414 aa).

Disordered regions lie at residues 1 to 61 (MDKD…TPFD) and 142 to 197 (KEDQ…SQRM). 2 stretches are compositionally biased toward low complexity: residues 12-24 (GESS…NSSG) and 35-49 (QQQQ…QQHQ). Basic and acidic residues predominate over residues 166-175 (RENKNVTKKE). The segment covering 176–185 (VKSKRKRART) has biased composition (basic residues). Residues 187-197 (KTSEEVESQRM) are compositionally biased toward basic and acidic residues. The bHLH domain maps to 194–245 (SQRMTHIAVERNRRKQMNEHLRVLRSLMPGSYVQRGDQASIIGGAIEFVREL). The short motif at 249-253 (LQCLE) is the LxCxE motif element.

As to quaternary structure, interacts with FAMA through its LxCxE motif. Self-interacts. Also interacts with bHLH071 and bHLH093. Interacts with RBR1. As to expression, resctricted to stomatal cell lineages (at protein level). Expressed in roots, leaves, stems, and flowers.

The protein localises to the nucleus. Functionally, transcription activator. Together with MYB88 and MYB124, ensures that stomata contain just two guard cells (GCs) by enforcing a single symmetric precursor cell division before stomatal maturity. Together with SPCH and MUTE, regulates the stomata formation. Required to promote differentiation and morphogenesis of stomatal guard cells and to halt proliferative divisions in their immediate precursors. Mediates the formation of stomata. Prevents histone H3K27me3 marks and derepresses stem cell gene expression. This Arabidopsis thaliana (Mouse-ear cress) protein is Transcription factor FAMA (FAMA).